We begin with the raw amino-acid sequence, 404 residues long: Snake venom metalloproteinase H5 (404 aa).

The first 6 residues, 1–6 (FPYQGS), serve as a signal peptide directing secretion. The propeptide occupies 7–177 (SIMLESGKVN…KPSWVNLTPK (171 aa)). One can recognise a Peptidase M12B domain in the interval 184–379 (TSVNLQLVVD…KKPKCIHKKS (196 aa)). 3 disulfides stabilise this stretch: cysteine 295–cysteine 374, cysteine 336–cysteine 358, and cysteine 338–cysteine 341. Histidine 320 serves as a coordination point for Zn(2+). Residue glutamate 321 is part of the active site. Histidine 324 and histidine 330 together coordinate Zn(2+). A propeptide spanning residues 379–404 (SLKTDTVSTSVSGNEPLDDNVDGFHA) is cleaved from the precursor. The disordered stretch occupies residues 385-404 (VSTSVSGNEPLDDNVDGFHA). The span at 394 to 404 (PLDDNVDGFHA) shows a compositional bias: acidic residues.

Monomer. Zn(2+) is required as a cofactor. In terms of tissue distribution, expressed by the venom gland.

Its subcellular location is the secreted. Its function is as follows. This probable venom zinc protease is not hemorrhagic when 3 ug are injected onto the back skin of guinea pig. This chain is Snake venom metalloproteinase H5, found in Deinagkistrodon acutus (Hundred-pace snake).